A 220-amino-acid chain; its full sequence is uncharacterized protein (220 aa).

7 helical membrane passes run 6-26 (FSILVDFAAGGLVLASVLIVW), 33-53 (IVRLLAWQGAALAAIPLLRGI), 59-79 (ALIAVGIAVLALRALVLPWLL), 103-123 (LLITAGLTLTAFAITQPVVNL), 126-146 (GVTINAVPAAFAVVLIALFVM), 157-177 (AGFLMLDNGIAATAFLLTAGV), and 179-199 (LIVELGASLDVLFAVIVIGVL).

The protein resides in the cell membrane. This is an uncharacterized protein from Mycobacterium tuberculosis (strain ATCC 25618 / H37Rv).